Consider the following 242-residue polypeptide: Transcription factor bHLH100 (242 aa).

Residues 61 to 113 (MKKLNHNASERERRKKINTMFSSLRSCLPPTNQTKKLSVSATVSQALKYIPEL) enclose the bHLH domain.

In terms of assembly, homodimer. In terms of tissue distribution, expressed constitutively in roots, leaves, and stems.

The protein resides in the nucleus. Functionally, plays a role in metal homeostasis. Confers tolerance to high zinc (Zn) and nickel (Ni). This Arabidopsis thaliana (Mouse-ear cress) protein is Transcription factor bHLH100 (BHLH100).